The following is a 122-amino-acid chain: Small ribosomal subunit protein bS16 (122 aa).

The disordered stretch occupies residues 81–122 (GLMKRDAKNNPKKGEPGEKAKERAKERAEKAAAGSTEDAAAE). The span at 83-110 (MKRDAKNNPKKGEPGEKAKERAKERAEK) shows a compositional bias: basic and acidic residues. Residues 111–122 (AAAGSTEDAAAE) show a composition bias toward low complexity.

This sequence belongs to the bacterial ribosomal protein bS16 family.

The sequence is that of Small ribosomal subunit protein bS16 from Xanthobacter autotrophicus (strain ATCC BAA-1158 / Py2).